The primary structure comprises 195 residues: IMP cyclohydrolase (195 aa).

This sequence belongs to the archaeal IMP cyclohydrolase family.

It catalyses the reaction IMP + H2O = 5-formamido-1-(5-phospho-D-ribosyl)imidazole-4-carboxamide. It participates in purine metabolism; IMP biosynthesis via de novo pathway; IMP from 5-formamido-1-(5-phospho-D-ribosyl)imidazole-4-carboxamide: step 1/1. Catalyzes the cyclization of 5-formylamidoimidazole-4-carboxamide ribonucleotide to IMP. The protein is IMP cyclohydrolase of Haloquadratum walsbyi (strain DSM 16790 / HBSQ001).